A 773-amino-acid polypeptide reads, in one-letter code: Probable serine/threonine-protein kinase MARK-C (773 aa).

The span at 1–27 (MESNKSSSHGDVSTSPSFLNNHHQFNN) shows a compositional bias: polar residues. Positions 1-32 (MESNKSSSHGDVSTSPSFLNNHHQFNNGGDII) are disordered. Positions 46 to 300 (YEVGKTLGNG…IQELKNHPWT (255 aa)) constitute a Protein kinase domain. Residues 52 to 60 (LGNGTFGKV) and Lys-75 contribute to the ATP site. Residue Asp-171 is the Proton acceptor of the active site. The stretch at 362-390 (RYASKEVENLKSKLELLSKRKKSFSDKRN) forms a coiled coil. 3 disordered regions span residues 382 to 445 (KKSF…SQGS), 462 to 487 (DNDI…NKDI), and 558 to 588 (YSIQ…TNLR). Over residues 405-443 (DLSSNNNNNQQQQNSPPSKTNSSSTSSSNRESNNNSPSQ) the composition is skewed to low complexity. Residues 445–474 (SIKEISLDELDNHIEQLDNDIENSDNNKSS) are a coiled coil. The span at 468–478 (SDNNKSSSLTR) shows a compositional bias: polar residues. Positions 561 to 573 (QQQQLQQQQQQQQ) are enriched in low complexity. Residues 724–773 (CFDEDNSVKFQIEIVKICNLDLTGIQLKRLSGDTWKYKDICTELVESMKL) form the KA1 domain.

Belongs to the protein kinase superfamily. CAMK Ser/Thr protein kinase family. SNF1 subfamily.

The enzyme catalyses L-seryl-[protein] + ATP = O-phospho-L-seryl-[protein] + ADP + H(+). The catalysed reaction is L-threonyl-[protein] + ATP = O-phospho-L-threonyl-[protein] + ADP + H(+). The protein is Probable serine/threonine-protein kinase MARK-C (mrkC) of Dictyostelium discoideum (Social amoeba).